Here is a 986-residue protein sequence, read N- to C-terminus: Probable serine/threonine-protein kinase DDB_G0272092 (986 aa).

The C2 domain occupies 1–107; the sequence is MARKIGSVRI…EYIVDTTKWY (107 aa). Ca(2+) is bound by residues D22, D28, D76, D78, S81, and D84. ANK repeat units follow at residues 137 to 167, 171 to 201, 205 to 238, 242 to 274, 278 to 307, and 312 to 344; these read PEKSPFIKAIKDNDTQAIELMMNKAKLDYTI, EGTPAIHIAAASNNIPLITMLLKGSDARVSI, HGNTPLHLFVQKNVSLNCEDIINKLIERGCGIND, LGETALHKACLATVVQKTTIVEQLLQKGAIINH, TRDTPLHYAIKVGKVEFVRFFLQNGANVMI, and PSRTPLELAKELGNPQIISKVEKVIEISDWLNE. In terms of domain architecture, SAM spans 333–396; the sequence is EKVIEISDWL…LRAVRKIKDP (64 aa). Over residues 412 to 438 the composition is skewed to low complexity; the sequence is HVENDNNNNNNNNNNNNNSQEQCNINN. Disordered stretches follow at residues 412–520 and 532–574; these read HVEN…SNTT and TTLT…PEGP. A compositionally biased stretch (polar residues) spans 439–448; sequence DSLGSGNRNS. Over residues 454-464 the composition is skewed to low complexity; it reads QNQNNTLNNNN. A compositionally biased stretch (polar residues) spans 465–476; the sequence is VESKSTGNLNSL. Composition is skewed to low complexity over residues 493 to 520 and 546 to 571; these read NILSPNPIPASSSAPAAPSPVAIGSNTT and TESTTPPQQQQQTTTITPTKTTTVTP. Residues 601 to 870 form the Protein kinase domain; the sequence is LTYNVLLGTG…ELLKIRDEYN (270 aa). ATP-binding positions include 607-615 and K628; that span reads LGTGASGKV. The active-site Proton acceptor is the D722. Composition is skewed to low complexity over residues 901 to 913 and 928 to 947; these read DSNNINNNNNNNN and SNSNLLNNNNNNNNNDSDNN. The tract at residues 901–986 is disordered; that stretch reads DSNNINNNNN…SPMEPKSIKK (86 aa). Polar residues-rich tracts occupy residues 948-959 and 969-978; these read ISEPATTDSITK and LTRTRSSSSP.

This sequence belongs to the protein kinase superfamily. TKL Ser/Thr protein kinase family. Ca(2+) serves as cofactor.

The enzyme catalyses L-seryl-[protein] + ATP = O-phospho-L-seryl-[protein] + ADP + H(+). It carries out the reaction L-threonyl-[protein] + ATP = O-phospho-L-threonyl-[protein] + ADP + H(+). This Dictyostelium discoideum (Social amoeba) protein is Probable serine/threonine-protein kinase DDB_G0272092.